The chain runs to 816 residues: Microbial collagenase (816 aa).

A signal peptide spans 1–27 (MSHIRFFPRHRLALACMLASVSSFSFA). Zn(2+) is bound at residue histidine 435. Glutamate 436 is an active-site residue. Histidine 439 contacts Zn(2+).

Belongs to the peptidase M9A family. Zn(2+) serves as cofactor.

Its subcellular location is the secreted. The enzyme catalyses Digestion of native collagen in the triple helical region at Xaa-|-Gly bonds. With synthetic peptides, a preference is shown for Gly at P3 and P1', Pro and Ala at P2 and P2', and hydroxyproline, Ala or Arg at P3'.. In terms of biological role, possesses gelatinolytic activity. Can cause weak haemolysis on blood agar. This Vibrio parahaemolyticus serotype O3:K6 (strain RIMD 2210633) protein is Microbial collagenase (prt).